The chain runs to 987 residues: UvrABC system protein A (987 aa).

33 to 40 (GLSGSGKS) contacts ATP. The C4-type zinc-finger motif lies at 255 to 282 (CPVCDYSLPELEPRLFSFNAPVGACPSC). ABC transporter domains follow at residues 312 to 589 (WDRR…PRSL) and 609 to 938 (PNPK…QFLA). An ATP-binding site is contributed by 642 to 649 (GVSGSGKS). Residues 741–767 (CEACQGDGMIKVEMHFLPDVYVPCDVC) form a C4-type zinc finger. Residues 948–987 (ETRPAAMANKPDARPPRKVKPEKVAKAAKSATKKTAKKAS) form a disordered region. Residues 958 to 972 (PDARPPRKVKPEKVA) show a composition bias toward basic and acidic residues. A compositionally biased stretch (basic residues) spans 978-987 (ATKKTAKKAS).

Belongs to the ABC transporter superfamily. UvrA family. As to quaternary structure, forms a heterotetramer with UvrB during the search for lesions.

The protein localises to the cytoplasm. Functionally, the UvrABC repair system catalyzes the recognition and processing of DNA lesions. UvrA is an ATPase and a DNA-binding protein. A damage recognition complex composed of 2 UvrA and 2 UvrB subunits scans DNA for abnormalities. When the presence of a lesion has been verified by UvrB, the UvrA molecules dissociate. This chain is UvrABC system protein A, found in Xanthomonas axonopodis pv. citri (strain 306).